Here is a 437-residue protein sequence, read N- to C-terminus: RNA-binding motif, single-stranded-interacting protein 3 (437 aa).

A disordered region spans residues 28-57 (YAPAPHPMAPPSPSTNSSSNNSSNNSSGEQ). Over residues 31-40 (APHPMAPPSP) the composition is skewed to pro residues. Residues 41–54 (STNSSSNNSSNNSS) are compositionally biased toward low complexity. RRM domains lie at 61–134 (TNLY…MAKQ) and 140–225 (TNLY…FADG). Residues 399–422 (TSPQTVAPSSQDTSGQQQQIAVDT) are compositionally biased toward polar residues. The disordered stretch occupies residues 399–437 (TSPQTVAPSSQDTSGQQQQIAVDTSNEHAPAYSYQQSKP).

As to expression, expressed in fetal brain, fetal lung, fetal liver, heart, brain, placenta, lung, liver, muscle, kidney and pancreas.

Its subcellular location is the cytoplasm. Its function is as follows. Binds poly(A) and poly(U) oligoribonucleotides. This chain is RNA-binding motif, single-stranded-interacting protein 3 (RBMS3), found in Homo sapiens (Human).